Here is a 458-residue protein sequence, read N- to C-terminus: UDP-N-acetylmuramate--L-alanine ligase (458 aa).

118 to 124 is an ATP binding site; the sequence is GTHGKTT.

This sequence belongs to the MurCDEF family.

The protein localises to the cytoplasm. It catalyses the reaction UDP-N-acetyl-alpha-D-muramate + L-alanine + ATP = UDP-N-acetyl-alpha-D-muramoyl-L-alanine + ADP + phosphate + H(+). The protein operates within cell wall biogenesis; peptidoglycan biosynthesis. Its function is as follows. Cell wall formation. The protein is UDP-N-acetylmuramate--L-alanine ligase of Clostridium acetobutylicum (strain ATCC 824 / DSM 792 / JCM 1419 / IAM 19013 / LMG 5710 / NBRC 13948 / NRRL B-527 / VKM B-1787 / 2291 / W).